A 207-amino-acid polypeptide reads, in one-letter code: Putative 3-methyladenine DNA glycosylase (207 aa).

It belongs to the DNA glycosylase MPG family.

The chain is Putative 3-methyladenine DNA glycosylase from Listeria monocytogenes serovar 1/2a (strain ATCC BAA-679 / EGD-e).